Consider the following 430-residue polypeptide: Trigger factor (430 aa).

The PPIase FKBP-type domain occupies glycine 163–proline 248.

The protein belongs to the FKBP-type PPIase family. Tig subfamily.

It is found in the cytoplasm. The enzyme catalyses [protein]-peptidylproline (omega=180) = [protein]-peptidylproline (omega=0). Functionally, involved in protein export. Acts as a chaperone by maintaining the newly synthesized protein in an open conformation. Functions as a peptidyl-prolyl cis-trans isomerase. The sequence is that of Trigger factor from Exiguobacterium sibiricum (strain DSM 17290 / CCUG 55495 / CIP 109462 / JCM 13490 / 255-15).